A 480-amino-acid chain; its full sequence is MFS-type transporter oryF (480 aa).

Positions 1–10 are enriched in basic and acidic residues; it reads MAEEVNERTR. Residues 1–24 are disordered; sequence MAEEVNERTRLLSQSDDPSPSLEE. The segment covering 11-22 has biased composition (low complexity); it reads LLSQSDDPSPSL. 12 helical membrane passes run 41 to 61, 81 to 101, 107 to 127, 138 to 158, 170 to 190, 197 to 217, 264 to 284, 308 to 328, 351 to 371, 378 to 398, 415 to 435, and 443 to 463; these read LCIAVISVYGLISPVIAAIIV, AFVSVYVLGWSFAPLVVGPLS, ISLLNTGHGLFLVFNALCAFA, FITGAVGSAPLSIGAGIIGDL, LYTLGPLLGPAIAPITGAYIV, AIFAWCSLYILITWVVGLCTL, FLGTQPIIQVLSLFMGYLFGL, ALNYISIAGGFILGSQITGSL, ILMLPAALLVPTGLLIYGWSA, IMPNIGIGIYALGLIMSYQCI, GALTILRSLLGFVLPILAPLI, and WGSSLLALWALVMGGLVPILL.

This sequence belongs to the major facilitator superfamily.

The protein localises to the membrane. Functionally, MFS-type transporter; part of the gene cluster that mediates the biosynthesis of oryzines, natural products with an unusual maleidride backbone. The sequence is that of MFS-type transporter oryF from Aspergillus oryzae (strain ATCC 42149 / RIB 40) (Yellow koji mold).